A 118-amino-acid chain; its full sequence is DNA-binding protein YG5714_1868 (118 aa).

It belongs to the PDCD5 family.

In Saccharolobus islandicus (strain Y.G.57.14 / Yellowstone #1) (Sulfolobus islandicus), this protein is DNA-binding protein YG5714_1868.